Reading from the N-terminus, the 341-residue chain is Uroporphyrinogen decarboxylase (341 aa).

Substrate contacts are provided by residues 23–27 (RQAGR), aspartate 73, tyrosine 148, serine 203, and histidine 318.

Belongs to the uroporphyrinogen decarboxylase family. In terms of assembly, homodimer.

The protein localises to the cytoplasm. The enzyme catalyses uroporphyrinogen III + 4 H(+) = coproporphyrinogen III + 4 CO2. The protein operates within porphyrin-containing compound metabolism; protoporphyrin-IX biosynthesis; coproporphyrinogen-III from 5-aminolevulinate: step 4/4. Functionally, catalyzes the decarboxylation of four acetate groups of uroporphyrinogen-III to yield coproporphyrinogen-III. The chain is Uroporphyrinogen decarboxylase from Brucella ovis (strain ATCC 25840 / 63/290 / NCTC 10512).